Here is a 943-residue protein sequence, read N- to C-terminus: MTDYKATLNLPDTQFPMKAGLPQREPQTLQRWNEIGLYSKLRKIGEGRPKFVLHDGPPYANGSIHIGHAVNKILKDIITRSKTLAGFDAPYVPGWDCHGLPIEHKVETTFGKNQPADLTRERCRTYASEQIEGQKADFIRLGVLGDWDNPYKTMDFANEAGEIRALAEMVKQGFVFKGLKPVNWCFDCGSALAEAEVEYQDKKSDAIDVAFPIEDADKLAAAFGLSELSKPTAIVIWTTTPWTIPANQALNVHPEFTYALVDTGERILLLAEELVESCLQRYGLQGQVIATAPGAALELIRFRHPFYERFSPVYLAEYVELGAGTGIVHSSPAYGEDDFRTCKAYGMSNDDILSPVQSNGVYTPDLPFFGGQFIWKANPAIVEKLAEVGALLKHQPIQHSYMHCWRHKTPLIYRATAQWFVGMDTQPKQGGTLRERALAAIEQTQFVPAWGQARLHSMIAGRPDWCISRQRNWGVPIPFFLHKATGELHPRTVELMEEVAKRVEQEGIEAWFKLDAAELLGAEAADYDKINDTLDVWFDSGTTHWHVLRGSHGLGHTTGPRADLYLEGSDQHRGWFHSSLLTGSAIDGHAPYKALLTHGFVVDENGRKMSKSLGNVVAPQEVNDSLGADIMRLWVASTDYSGEMAVSKVILQRSADAYRRIRNTARFMLANLNGFDPAKDLLQPEQMLDLDRWAVDAALRLQEEIIEAYADYRFWNVYSKVHNFCVQELGGFYLDIIKDRQYTTAADSVARRSCQSALLHISEALVRWIAPILAFTAEEIWQFLPGERNESVMLNTWYAGLERLPEGFELDRAYWDRVMEVKAAVNKELENLRTAKAIGASLQAEVTLFCDDAKQADLAKLGDELRFALITSAAQTAPLADAPADAVVTEVEGLKLKILKSAHAKCGRCWHFRADVGSHAAHPELCGRCVSNIEGEGEVRKHA.

A 'HIGH' region motif is present at residues 58-68 (PYANGSIHIGH). E567 provides a ligand contact to L-isoleucyl-5'-AMP. Residues 608-612 (KMSKS) carry the 'KMSKS' region motif. Residue K611 coordinates ATP. Zn(2+) contacts are provided by C906, C909, C926, and C929.

Belongs to the class-I aminoacyl-tRNA synthetase family. IleS type 1 subfamily. In terms of assembly, monomer. Requires Zn(2+) as cofactor.

Its subcellular location is the cytoplasm. The enzyme catalyses tRNA(Ile) + L-isoleucine + ATP = L-isoleucyl-tRNA(Ile) + AMP + diphosphate. Functionally, catalyzes the attachment of isoleucine to tRNA(Ile). As IleRS can inadvertently accommodate and process structurally similar amino acids such as valine, to avoid such errors it has two additional distinct tRNA(Ile)-dependent editing activities. One activity is designated as 'pretransfer' editing and involves the hydrolysis of activated Val-AMP. The other activity is designated 'posttransfer' editing and involves deacylation of mischarged Val-tRNA(Ile). The protein is Isoleucine--tRNA ligase of Ectopseudomonas mendocina (strain ymp) (Pseudomonas mendocina).